The chain runs to 53 residues: Sec-independent protein translocase protein TatA (53 aa).

A helical transmembrane segment spans residues 1–21; the sequence is MGMSFSHLLIVLLIIFVLFGA.

Belongs to the TatA/E family. In terms of assembly, the Tat system comprises two distinct complexes: a TatABC complex, containing multiple copies of TatA, TatB and TatC subunits, and a separate TatA complex, containing only TatA subunits. Substrates initially bind to the TatABC complex, which probably triggers association of the separate TatA complex to form the active translocon.

It is found in the cell inner membrane. Its function is as follows. Part of the twin-arginine translocation (Tat) system that transports large folded proteins containing a characteristic twin-arginine motif in their signal peptide across membranes. TatA could form the protein-conducting channel of the Tat system. The polypeptide is Sec-independent protein translocase protein TatA (Rickettsia rickettsii (strain Iowa)).